A 292-amino-acid polypeptide reads, in one-letter code: NAD kinase (292 aa).

Aspartate 73 serves as the catalytic Proton acceptor. Residues 73 to 74 (DG), 147 to 148 (NE), histidine 158, arginine 175, aspartate 177, 188 to 193 (TAYSLS), and glutamine 247 each bind NAD(+).

Belongs to the NAD kinase family. A divalent metal cation serves as cofactor.

It localises to the cytoplasm. The catalysed reaction is NAD(+) + ATP = ADP + NADP(+) + H(+). In terms of biological role, involved in the regulation of the intracellular balance of NAD and NADP, and is a key enzyme in the biosynthesis of NADP. Catalyzes specifically the phosphorylation on 2'-hydroxyl of the adenosine moiety of NAD to yield NADP. The chain is NAD kinase from Klebsiella pneumoniae subsp. pneumoniae (strain ATCC 700721 / MGH 78578).